Reading from the N-terminus, the 342-residue chain is Bifunctional terpene synthase Agr4 (342 aa).

The Mg(2+) site is built by aspartate 87, asparagine 222, serine 226, and glutamate 230. Residues 87–91 (DEVSD) carry the DDXXD motif motif. (2E,6E)-farnesyl diphosphate-binding residues include arginine 308 and tyrosine 309.

Belongs to the terpene synthase family. It depends on Mg(2+) as a cofactor.

The enzyme catalyses (2E,6E)-farnesyl diphosphate = delta-cadinene + diphosphate. The catalysed reaction is (2E,6E)-farnesyl diphosphate = gamma-muurolene + diphosphate. It catalyses the reaction (2E,6E)-farnesyl diphosphate = beta-copaene + diphosphate. It carries out the reaction (2E)-geranyl diphosphate = beta-myrcene + diphosphate. Functionally, terpene cyclase that catalyzes the cyclization of farnesyl diphosphate (FPP) to various sesquiterpenes, including beta-copaene, alpha-cubebene, cadina-1(6),4-diene, gamma-muurolene, delta-cadinene, epizonarene, epicubenol and cubenol. Agr4 is also able to use the monoterpene precursor geranyl diphosphate (GPP) as substrates to synthesize the monoterpene beta-myrcene. Delta-cadinene is the major product of Agr4. This Cyclocybe aegerita (Black poplar mushroom) protein is Bifunctional terpene synthase Agr4.